The sequence spans 332 residues: Glycerol-3-phosphate dehydrogenase [NAD(P)+] (332 aa).

NADPH is bound by residues Trp13, Lys34, and Lys108. Residues Lys108, Gly136, and Ser138 each coordinate sn-glycerol 3-phosphate. Ala140 contributes to the NADPH binding site. Sn-glycerol 3-phosphate is bound by residues Lys191, Asp244, Ser254, Arg255, and Asn256. The active-site Proton acceptor is the Lys191. Arg255 lines the NADPH pocket. NADPH is bound by residues Val279 and Glu281.

Belongs to the NAD-dependent glycerol-3-phosphate dehydrogenase family.

It localises to the cytoplasm. The enzyme catalyses sn-glycerol 3-phosphate + NAD(+) = dihydroxyacetone phosphate + NADH + H(+). The catalysed reaction is sn-glycerol 3-phosphate + NADP(+) = dihydroxyacetone phosphate + NADPH + H(+). It functions in the pathway membrane lipid metabolism; glycerophospholipid metabolism. Its function is as follows. Catalyzes the reduction of the glycolytic intermediate dihydroxyacetone phosphate (DHAP) to sn-glycerol 3-phosphate (G3P), the key precursor for phospholipid synthesis. The sequence is that of Glycerol-3-phosphate dehydrogenase [NAD(P)+] from Francisella tularensis subsp. novicida (strain U112).